A 162-amino-acid chain; its full sequence is Putative auxin-responsive protein IAA28 (162 aa).

The PB1 domain occupies Ser-23–Ala-118. Residues Asn-122–Asp-141 are disordered.

Belongs to the Aux/IAA family. Homodimers and heterodimers.

Its subcellular location is the nucleus. In terms of biological role, aux/IAA proteins are short-lived transcriptional factors that function as repressors of early auxin response genes at low auxin concentrations. The protein is Putative auxin-responsive protein IAA28 (IAA28) of Oryza sativa subsp. japonica (Rice).